We begin with the raw amino-acid sequence, 109 residues long: Ubiquitin-related modifier 1 homolog (109 aa).

G109 carries the 1-thioglycine modification. G109 participates in a covalent cross-link: Glycyl lysine isopeptide (Gly-Lys) (interchain with K-? in acceptor proteins).

Belongs to the URM1 family. Post-translationally, C-terminal thiocarboxylation occurs in 2 steps, it is first acyl-adenylated (-COAMP) via the hesA/moeB/thiF part of the MOCS3 homolog, then thiocarboxylated (-COSH) via the rhodanese domain of the MOCS3 homolog.

The protein resides in the cytoplasm. It functions in the pathway tRNA modification; 5-methoxycarbonylmethyl-2-thiouridine-tRNA biosynthesis. In terms of biological role, acts as a sulfur carrier required for 2-thiolation of mcm(5)S(2)U at tRNA wobble positions of cytosolic tRNA(Lys), tRNA(Glu) and tRNA(Gln). Serves as sulfur donor in tRNA 2-thiolation reaction by being thiocarboxylated (-COSH) at its C-terminus by MOCS3. The sulfur is then transferred to tRNA to form 2-thiolation of mcm(5)S(2)U. Also acts as a ubiquitin-like protein (UBL) that is covalently conjugated via an isopeptide bond to lysine residues of target proteins. The thiocarboxylated form serves as substrate for conjugation and oxidative stress specifically induces the formation of UBL-protein conjugates. This Culex quinquefasciatus (Southern house mosquito) protein is Ubiquitin-related modifier 1 homolog.